Reading from the N-terminus, the 146-residue chain is Large ribosomal subunit protein uL22 (146 aa).

Positions 1-39 (MAETQTTTPKKKAERRAPPPARARKNRPAAPAPGPHASL) are disordered.

It belongs to the universal ribosomal protein uL22 family. Part of the 50S ribosomal subunit.

In terms of biological role, this protein binds specifically to 23S rRNA; its binding is stimulated by other ribosomal proteins, e.g. L4, L17, and L20. It is important during the early stages of 50S assembly. It makes multiple contacts with different domains of the 23S rRNA in the assembled 50S subunit and ribosome. Functionally, the globular domain of the protein is located near the polypeptide exit tunnel on the outside of the subunit, while an extended beta-hairpin is found that lines the wall of the exit tunnel in the center of the 70S ribosome. The protein is Large ribosomal subunit protein uL22 of Anaeromyxobacter dehalogenans (strain 2CP-1 / ATCC BAA-258).